The sequence spans 447 residues: Cysteine--tRNA ligase (447 aa).

Cysteine 28 provides a ligand contact to Zn(2+). Positions 30–40 (PTVYNYIHVGN) match the 'HIGH' region motif. Cysteine 211, histidine 236, and glutamate 240 together coordinate Zn(2+). Positions 268-272 (KMSKS) match the 'KMSKS' region motif. Lysine 271 is a binding site for ATP.

This sequence belongs to the class-I aminoacyl-tRNA synthetase family. In terms of assembly, monomer. Zn(2+) is required as a cofactor.

It is found in the cytoplasm. The enzyme catalyses tRNA(Cys) + L-cysteine + ATP = L-cysteinyl-tRNA(Cys) + AMP + diphosphate. The protein is Cysteine--tRNA ligase of Streptococcus mutans serotype c (strain ATCC 700610 / UA159).